We begin with the raw amino-acid sequence, 121 residues long: Large ribosomal subunit protein bL17 (121 aa).

This sequence belongs to the bacterial ribosomal protein bL17 family. Part of the 50S ribosomal subunit. Contacts protein L32.

This chain is Large ribosomal subunit protein bL17, found in Sulfurihydrogenibium sp. (strain YO3AOP1).